The sequence spans 430 residues: GTPase Obg (430 aa).

The region spanning 1 to 158 (MFVDQVKISL…LDVSLELKLL (158 aa)) is the Obg domain. Positions 118–145 (KGGRGGRGNSRFATPRNPAPDFSEKGEP) are disordered. Residues 159 to 329 (ADVGLVGFPS…LLYAIADKLE (171 aa)) form the OBG-type G domain. GTP contacts are provided by residues 165-172 (GFPSVGKS), 190-194 (FTTIK), 212-215 (DLPG), 282-285 (NKMD), and 310-312 (STI). 2 residues coordinate Mg(2+): Ser172 and Thr192. Residues 352 to 430 (KHTPSQDKFT…ILGGEFEFVE (79 aa)) enclose the OCT domain.

The protein belongs to the TRAFAC class OBG-HflX-like GTPase superfamily. OBG GTPase family. As to quaternary structure, monomer. Requires Mg(2+) as cofactor.

It is found in the cytoplasm. Its function is as follows. An essential GTPase which binds GTP, GDP and possibly (p)ppGpp with moderate affinity, with high nucleotide exchange rates and a fairly low GTP hydrolysis rate. Plays a role in control of the cell cycle, stress response, ribosome biogenesis and in those bacteria that undergo differentiation, in morphogenesis control. This Staphylococcus aureus (strain MRSA252) protein is GTPase Obg.